We begin with the raw amino-acid sequence, 71 residues long: MTLVKNMSSILENENILHGLIKTSNAPDCVSNASYKDFKDAIDSLTNDLELRLASDFFIKSNGRLSGLLPQ.

This is an uncharacterized protein from Vaccinia virus (strain Copenhagen) (VACV).